We begin with the raw amino-acid sequence, 447 residues long: NADH-quinone oxidoreductase subunit N (447 aa).

The next 13 helical transmembrane spans lie at 4 to 24, 27 to 47, 68 to 88, 92 to 112, 113 to 133, 146 to 166, 181 to 201, 215 to 235, 245 to 265, 280 to 300, 302 to 322, 342 to 362, and 376 to 395; these read FAAL…MLAA, LPGL…VALA, LTGL…RPDG, EGPA…GAVH, AASL…LFVL, FLIL…LGHA, ALLT…LALV, PGAA…TALV, VWAL…NLAA, VGHA…APAA, LFYI…AALI, GAAM…AGFF, and AWAL…YYYL.

The protein belongs to the complex I subunit 2 family. As to quaternary structure, NDH-1 is composed of 14 different subunits. Subunits NuoA, H, J, K, L, M, N constitute the membrane sector of the complex.

It is found in the cell inner membrane. The enzyme catalyses a quinone + NADH + 5 H(+)(in) = a quinol + NAD(+) + 4 H(+)(out). In terms of biological role, NDH-1 shuttles electrons from NADH, via FMN and iron-sulfur (Fe-S) centers, to quinones in the respiratory chain. The immediate electron acceptor for the enzyme in this species is believed to be ubiquinone. Couples the redox reaction to proton translocation (for every two electrons transferred, four hydrogen ions are translocated across the cytoplasmic membrane), and thus conserves the redox energy in a proton gradient. In Cereibacter sphaeroides (strain ATCC 17025 / ATH 2.4.3) (Rhodobacter sphaeroides), this protein is NADH-quinone oxidoreductase subunit N.